Here is a 514-residue protein sequence, read N- to C-terminus: Protein phosphatase 1H (514 aa).

Phosphoserine is present on serine 7. The PPM-type phosphatase domain occupies 77-507; that stretch reads ATGYAEVINA…DDISVYVIPL (431 aa). Positions 109–135 are disordered; sequence AVTSTPNRNSSKRRSSLPNGEGLQLKE. Threonine 113 carries the post-translational modification Phosphothreonine. Serine 124 and serine 211 each carry phosphoserine. At arginine 213 the chain carries Omega-N-methylarginine. Serine 221 is subject to Phosphoserine. A Phosphothreonine modification is found at threonine 224. At serine 422 the chain carries Phosphoserine.

Belongs to the PP2C family.

It localises to the nucleus. The protein localises to the cytoplasm. The enzyme catalyses O-phospho-L-seryl-[protein] + H2O = L-seryl-[protein] + phosphate. It catalyses the reaction O-phospho-L-threonyl-[protein] + H2O = L-threonyl-[protein] + phosphate. Dephosphorylates CDKN1B at 'Thr-187', thus removing a signal for proteasomal degradation. The polypeptide is Protein phosphatase 1H (PPM1H) (Homo sapiens (Human)).